The sequence spans 550 residues: Arginine--tRNA ligase (550 aa).

A 'HIGH' region motif is present at residues 130-140; sequence ANPTGPIHIGG.

Belongs to the class-I aminoacyl-tRNA synthetase family. Monomer.

It is found in the cytoplasm. The catalysed reaction is tRNA(Arg) + L-arginine + ATP = L-arginyl-tRNA(Arg) + AMP + diphosphate. This chain is Arginine--tRNA ligase, found in Mycolicibacterium paratuberculosis (strain ATCC BAA-968 / K-10) (Mycobacterium paratuberculosis).